Reading from the N-terminus, the 1411-residue chain is Protein three rows (1411 aa).

The segment at 1065 to 1071 (VEPIRKQ) is separase cleavage-site. Disordered stretches follow at residues 1221–1240 (LEPP…NISP), 1268–1301 (VRPA…KSPK), and 1330–1411 (AKST…RHRN). 2 stretches are compositionally biased toward low complexity: residues 1270–1289 (PASS…NASS) and 1386–1398 (TAEQ…TATP).

In terms of assembly, interacts with pim and Sse. Cleavage of thr contributes to inactivation of Sse.

Its subcellular location is the cytoplasm. Its function is as follows. Required specifically for chromosome disjunction during all mitoses; maternally provided protein is sufficient until mitosis 14 then zygotic protein is required. Involved in formation and/or maintenance of epithelial structures: bud extension during Malpighian tubule development, and foregut and hindgut morphogenesis. The chain is Protein three rows (thr) from Drosophila virilis (Fruit fly).